Here is a 77-residue protein sequence, read N- to C-terminus: U14-theraphotoxin-Cg1c (77 aa).

An N-terminal signal peptide occupies residues 1–21 (MNTSDPPAVLRIAAITLLCTA). A propeptide spanning residues 22–49 (SESVEQNPLIPFENAVLGSYAKMASEKR) is cleaved from the precursor. 2 cysteine pairs are disulfide-bonded: cysteine 50–cysteine 64 and cysteine 57–cysteine 69.

This sequence belongs to the neurotoxin 10 (Hwtx-1) family. 65 (Jztx-21) subfamily. Expressed by the venom gland.

Its subcellular location is the secreted. Its function is as follows. Probable ion channel inhibitor. This is U14-theraphotoxin-Cg1c from Chilobrachys guangxiensis (Chinese earth tiger tarantula).